We begin with the raw amino-acid sequence, 228 residues long: Ephrin-A5 (228 aa).

The N-terminal stretch at 1-20 is a signal peptide; sequence MLHVEMLTLLFLVLWMCVFS. One can recognise an Ephrin RBD domain in the interval 29 to 162; sequence ADRYAVYWNS…KLKVFVRPTN (134 aa). Asn-37 is a glycosylation site (N-linked (GlcNAc...) asparagine). 2 cysteine pairs are disulfide-bonded: Cys-62–Cys-102 and Cys-90–Cys-151. Asn-162 is a glycosylation site (N-linked (GlcNAc...) asparagine; atypical). The interval 186 to 205 is disordered; that stretch reads EPADDTVHESAEPSRGENAA. Over residues 190 to 200 the composition is skewed to basic and acidic residues; the sequence is DTVHESAEPSR. A lipid anchor (GPI-anchor amidated asparagine) is attached at Asn-203. The propeptide at 204–228 is removed in mature form; it reads AAQTPRIPSRLLAILLFLLAMLLTL.

It belongs to the ephrin family. Binds to the receptor tyrosine kinases EPHA2, EPHA3 and EPHB1. Forms a ternary EFNA5-EPHA3-ADAM10 complex mediating EFNA5 extracellular domain shedding by ADAM10 which regulates the EFNA5-EPHA3 complex internalization and function. Binds to EPHB2. Interacts with EPHA8; activates EPHA8. Expressed in myogenic progenitor cells.

Its subcellular location is the cell membrane. The protein localises to the membrane. It localises to the caveola. Functionally, cell surface GPI-bound ligand for Eph receptors, a family of receptor tyrosine kinases which are crucial for migration, repulsion and adhesion during neuronal, vascular and epithelial development. Binds promiscuously Eph receptors residing on adjacent cells, leading to contact-dependent bidirectional signaling into neighboring cells. The signaling pathway downstream of the receptor is referred to as forward signaling while the signaling pathway downstream of the ephrin ligand is referred to as reverse signaling. Induces compartmentalized signaling within a caveolae-like membrane microdomain when bound to the extracellular domain of its cognate receptor. This signaling event requires the activity of the Fyn tyrosine kinase. Activates the EPHA3 receptor to regulate cell-cell adhesion and cytoskeletal organization. With the receptor EPHA2 may regulate lens fiber cells shape and interactions and be important for lens transparency maintenance. May function actively to stimulate axon fasciculation. The interaction of EFNA5 with EPHA5 also mediates communication between pancreatic islet cells to regulate glucose-stimulated insulin secretion. Cognate/functional ligand for EPHA7, their interaction regulates brain development modulating cell-cell adhesion and repulsion. This chain is Ephrin-A5 (Efna5), found in Mus musculus (Mouse).